The following is a 366-amino-acid chain: Chorismate synthase (366 aa).

Residue R47 participates in NADP(+) binding. FMN-binding positions include 124–126 (RSS), G286, 301–305 (KPVAT), and R327.

Belongs to the chorismate synthase family. Homotetramer. Requires FMNH2 as cofactor.

It catalyses the reaction 5-O-(1-carboxyvinyl)-3-phosphoshikimate = chorismate + phosphate. Its pathway is metabolic intermediate biosynthesis; chorismate biosynthesis; chorismate from D-erythrose 4-phosphate and phosphoenolpyruvate: step 7/7. In terms of biological role, catalyzes the anti-1,4-elimination of the C-3 phosphate and the C-6 proR hydrogen from 5-enolpyruvylshikimate-3-phosphate (EPSP) to yield chorismate, which is the branch point compound that serves as the starting substrate for the three terminal pathways of aromatic amino acid biosynthesis. This reaction introduces a second double bond into the aromatic ring system. The sequence is that of Chorismate synthase from Methylacidiphilum infernorum (isolate V4) (Methylokorus infernorum (strain V4)).